The following is a 456-amino-acid chain: tRNA modification GTPase MnmE (456 aa).

The (6S)-5-formyl-5,6,7,8-tetrahydrofolate site is built by Arg25, Glu82, and Lys121. One can recognise a TrmE-type G domain in the interval 217–379 (GIKVVIIGKP…LLDEIVKIAG (163 aa)). Residue Asn227 coordinates K(+). GTP contacts are provided by residues 227–232 (NAGKSS), 246–252 (TDIAGTT), and 271–274 (DTAG). Mg(2+) is bound at residue Ser231. Residues Thr246, Ile248, and Thr251 each contribute to the K(+) site. Mg(2+) is bound at residue Thr252. Lys456 serves as a coordination point for (6S)-5-formyl-5,6,7,8-tetrahydrofolate.

It belongs to the TRAFAC class TrmE-Era-EngA-EngB-Septin-like GTPase superfamily. TrmE GTPase family. As to quaternary structure, homodimer. Heterotetramer of two MnmE and two MnmG subunits. Requires K(+) as cofactor.

The protein localises to the cytoplasm. Functionally, exhibits a very high intrinsic GTPase hydrolysis rate. Involved in the addition of a carboxymethylaminomethyl (cmnm) group at the wobble position (U34) of certain tRNAs, forming tRNA-cmnm(5)s(2)U34. The protein is tRNA modification GTPase MnmE of Endomicrobium trichonymphae.